The following is a 501-amino-acid chain: TNF receptor-associated factor 2 (501 aa).

N-acetylalanine is present on A2. A Phosphoserine modification is found at S5. T7 carries the phosphothreonine modification. S11 carries the phosphoserine modification. At T22 the chain carries Phosphothreonine. Residue K31 forms a Glycyl lysine isopeptide (Lys-Gly) (interchain with G-Cter in ubiquitin) linkage. The RING-type zinc-finger motif lies at 34–73 (CSACKNILRRPFQAQCGHRYCSFCLTSILSSGPQNCAACV). The residue at position 117 (T117) is a Phosphothreonine; by PKC. 2 consecutive TRAF-type zinc fingers follow at residues 124-180 (CHEG…VHYE) and 177-233 (VHYE…ENLQ). An important for interaction with BIRC2 and BIRC3 region spans residues 283 to 293 (ENIVCVLNREV). A coiled-coil region spans residues 298–348 (VTAEACSRQHRLDQDKIEALSNKVQQLERSIGLKDLAMADLEQKVSELEVS). K320 participates in a covalent cross-link: Glycyl lysine isopeptide (Lys-Gly) (interchain with G-Cter in ubiquitin). Residues 351–496 (DGVFIWKISD…DDAIFIKAIV (146 aa)) form the MATH domain.

This sequence belongs to the TNF receptor-associated factor family. A subfamily. Homotrimer. Heterotrimer with TRAF1. Heterotrimer with TRAF3 (via TRAF domain). The domain containing the RING-type and the first TRAF-type zinc finger can also form homodimers (in vitro). Interacts with TNFRSF1B/TNFR2. Interacts with TNFRSF5/CD40. Interacts with TNFRSF4, TNFRSF7/CD27, TNFRSF8/CD30, TNFRSF9/CD137, TNFRSF11A/RANK, TNFRSF13B/TACI, TNFRSF14, TNFRSF16/NGFR, TNFRSF17/BCMA, TNFRSF18/AITR, TNFRSF19/TROY, TNFRSF19L/RELT and EDAR. Stimulation of TNF-alpha receptor TNFRSF1A leads to the formation of two distinct signaling complexes. Plasma membrane-bound complex I is composed of TNFRSF1A, TRADD, RIPK1, TRAF2 and BIRC2/c-IAP1 or BIRC3 which interacts with CHUCK/IKK-alpha, IKBKB/IKK-beta and IKBKG/IKK-gamma promoting cell survival. Subsequently, TRADD, RIPK1 and TRAF2 dissociate from TNFRSF1A and form cytoplasmic complex II with FADD and caspase CASP8 promoting cell apoptosis. Interacts with TRADD. Identified in a complex with TNFRSF1A, RIPK1 and IKBKB/IKK-beta. Interacts with RIPK2. Interacts with BIRC2 and BIRC3 N-terminus; a single BIRC2 or BIRC3 molecule interacts with a heterotrimer formed by TRAF1 and TRAF2, or a TRAF2 homotrimer. Identified in a complex composed of TRAF2, TRAF3, BIRC2 and BIRC3. Interacts with BIRC2; the interaction promotes BIRC2 stability. Interaction with BIRC2 and/or BIRC3 is essential for ubiquitination of IKBKE, degradation of NFKBIA and activation of NF-kappa-B. Within complex I, phosphorylated TRAF2 interacts (via 'Lys-63'-linked polyubiquitin chains) with CHUCK/IKK-alpha, IKBKB/IKK-beta, IKBKG/IKK-gamma TAB2, TAB3 and TAK1 in response to TNF-alpha stimulation. Within complex I, interacts with UXT isoform 1 (via TPQE motif); the interaction prevents the recruitment of FADD and CASP8/caspase 8 to complex I. Forms a complex composed of TNFRSF8/CD30 or TNFRSF1B/TNFR2, and TRAF1, TRAF2 and E3 ligase TRAIP. Within the complex, interacts with TRAIP; the interaction inhibits TRAF2-mediated NF-kappa B activation. Component of a complex composed of TANK and TBK1. Interacts with TRPC4AP. Interacts with MAP3K1/MEKK1, MAP3K5/ASK1 and MAP3K11/MLK3 in response to TNF-alpha stimulation; the interaction leads to JNK activation and interaction with MAP3K5 is inhibited by PRMT1. Component of a complex composed of MAP3K14/NIK BIRC3 and TRAF3; the interaction leads to BIRC2/3-mediated ubiquitination of TRAF3 upon CD40 engagement in a TRAF2-dependent manner. Interacts with MAP3K14/NIK in response to TNF-alpha stimulation; the interaction leads to NF-kappa B activation. Interacts with PEG3; the interaction may promote TRAF2-mediated NF-kappa B activation. Interacts with HIVEP3; the interaction may inhibit TNF-alpha-TRAF2-mediated NF-kappa B and JNK activation. Interacts with TANK/ITRAF; the interaction prevents interaction between TNFRSF1B/TNFR2 and TRAF2. Interacts with deubiquitinating enzyme CYLD; the interaction results in the deubiquitination and inactivation of TRAF2. Interacts with SIAH2; the interaction leads to TRAF2 ubiquitination and degradation. Interacts with E2 conjugating enzyme UBE2N/Ubc13, E3 ligase ITCH and RNF11 in response to TNF-alpha stimulation. Interacts with ubiquitin-editing enzyme TNFAIP3/A20 in response to TNF-alpha stimulation; the interaction promotes TRAF2 dissociation from UBE2N/Ubc13, ITCH, RNF11 and TAX1BP1 and prevents prolonged TRAF-2 ubiquitination. Interacts with TAX1BP1 in response to TNF-alpha stimulation; the interaction promotes TRAF2 dissociation from UBE2N/Ubc13 and TNFAIP3/A20, and prevents prolonged TRAF-2 ubiquitination. Interacts (via C-terminus) with EIF2AK2/PKR (via the kinase catalytic domain). Interacts with deubiquitinating enzyme USP48. Interacts with PTPN2; probably involved in TNF-mediated signaling. Interacts with Toll-like receptor TLR4/3 adapter TICAM1/TRIF; the interaction may promote TICAM1 ubiquitination. Interacts with kinase/endoribonuclease ERN1/IRE1 and DAB2IP in response to ER stress; the interaction requires DAB2IP. Interacts with ERN1/IRE1 and TAOK3 in response to ER stress; the interaction may promote TRAF2 phosphorylation. Interacts (via zinc fingers) with DAB2IP (via C-terminus PER domain) in response to TNF-alpha stimulation. Interacts with CASP8AP2/FLASH. Interacts with NFATC2IP; the interaction may repress IL-4 production in T cells. Interacts with kinase CDK9. Interacts with sphingosine kinase 1 SPHK1. Interacts with kinase TNIK. Interacts with TRAFD1. Interacts with DNA phosphodiesterase TDP2. Interacts with MAVS/IPS1. Interacts with CARD14. Interacts with GPS2. Interacts with XPNPEP3. Interacts with RIPK3. Interacts with RELL2. Interacts with LRRC19. Interacts with GAPDH; promoting TRAF2 ubiquitination. In terms of processing, phosphorylated at several serine residues within the first 128 amino acid residues. Phosphorylated at Thr-117 in response to signaling via TNF and TNFRSF1A. Phosphorylation at Thr-117 is required for 'Lys-63'-linked polyubiquitination, but not for 'Lys-48'-linked polyubiquitination. Phosphorylation at Thr-117 is important for interaction with IKKA and IKKB, activation of IKK and subsequent activation of NF-kappa-B. Post-translationally, undergoes both 'Lys-48'-linked and 'Lys-63'-linked polyubiquitination. Polyubiquitinated via 'Lys-63'-linked ubiquitin in response to TNF signaling; this requires prior phosphorylation at Thr-117. 'Lys-63'-linked polyubiquitination promotes TRAF2-mediated activation of NF-kappa-B. Can be polyubiquitinated at several Lys residues via 'Lys-48'-linked ubiquitin chains in response to TNF signaling, leading to proteasomal degradation. Autoubiquitinated, leading to its subsequent proteasomal degradation. Polyubiquitinated by BIRC2 and SIAH2, leading to its subsequent proteasomal degradation. Not ubiquitinated by BIRC3 or SIAH1. Deubiquitinated by CYLD, a protease that specifically cleaves 'Lys-63'-linked polyubiquitin chains. Ubiquination is inhibited by LRRC19; inhiits proteasomal degradation. Ubiquitinated at Lys-320 by the SCF(FBXL2) complex, leading to its degradation by the proteasome. Ubiquitinated by E3 ubiquitin-protein ligase complex containing FBXO7; leading to repression of NF-kappa-B signaling. In terms of tissue distribution, isoform 1 and isoform 2 are expressed in spleen, adipose tissues, skeletal muscles, thymus, testis, heart, lung, brain. Isoform 2 is very weakly expressed in heart, lung and brain.

The protein localises to the cytoplasm. The enzyme catalyses S-ubiquitinyl-[E2 ubiquitin-conjugating enzyme]-L-cysteine + [acceptor protein]-L-lysine = [E2 ubiquitin-conjugating enzyme]-L-cysteine + N(6)-ubiquitinyl-[acceptor protein]-L-lysine.. It participates in protein modification; protein ubiquitination. Its activity is regulated as follows. Has very low E3 ubiquitin ligase activity in the absence of sphingosine-1-phosphate. E3 ubiquitin ligase activity is strongly activated by cytoplasmic sphingosine-1-phosphate. Functionally, E3 ubiquitin-protein ligase that regulates activation of NF-kappa-B and JNK and plays a central role in the regulation of cell survival and apoptosis. Catalyzes 'Lys-63'-linked ubiquitination of target proteins, such as BIRC3, IKBKE, MLST8, RIPK1 and TICAM1. Is an essential constituent of several E3 ubiquitin-protein ligase complexes, where it promotes the ubiquitination of target proteins by bringing them into contact with other E3 ubiquitin ligases. Regulates BIRC2 and BIRC3 protein levels by inhibiting their autoubiquitination and subsequent degradation; this does not depend on the TRAF2 RING-type zinc finger domain. Plays a role in mediating activation of NF-kappa-B by EIF2AK2/PKR. In complex with BIRC2 or BIRC3, promotes ubiquitination of IKBKE. Acts as a regulator of mTORC1 and mTORC2 assembly by mediating 'Lys-63'-linked ubiquitination of MLST8, thereby inhibiting formation of the mTORC2 complex, while facilitating assembly of the mTORC1 complex. Required for normal antibody isotype switching from IgM to IgG. The chain is TNF receptor-associated factor 2 (Traf2) from Mus musculus (Mouse).